Reading from the N-terminus, the 306-residue chain is D-glucosamine-6-phosphate 4-epimerase (306 aa).

An SIS domain is found at 19-153; it reads DIPGVKTAEK…TGSNYRVQDL (135 aa). Catalysis depends on Glu200, which acts as the Proton acceptor. Catalysis depends on His216, which acts as the Proton donor. The active-site Proton acceptor is the Arg296.

The protein belongs to the PGI/PMI family.

It catalyses the reaction D-glucosamine 6-phosphate = D-galactosamine 6-phosphate. Its function is as follows. Involved in the synthesis of UDP-N-acetylgalactosamine (UDP-GalNAc). Catalyzes the conversion of glucosamine-6-phosphate (GlcN-6-P) to galactosamine-6-phosphate (GalN-6-P). This Sulfolobus acidocaldarius (strain ATCC 33909 / DSM 639 / JCM 8929 / NBRC 15157 / NCIMB 11770) protein is D-glucosamine-6-phosphate 4-epimerase.